Consider the following 387-residue polypeptide: Mitogen-activated protein kinase homolog MMK1 (387 aa).

The Protein kinase domain occupies 55–340 (KPPIMPIGKG…VEDALAHPYL (286 aa)). Residues 61–69 (IGKGAYGIV) and lysine 84 each bind ATP. Aspartate 181 (proton acceptor) is an active-site residue. Threonine 213 is modified (phosphothreonine). The TXY motif lies at 213 to 215 (TEY). The residue at position 215 (tyrosine 215) is a Phosphotyrosine.

Belongs to the protein kinase superfamily. CMGC Ser/Thr protein kinase family. MAP kinase subfamily. Mg(2+) serves as cofactor. Post-translationally, dually phosphorylated on Thr-213 and Tyr-215, which activates the enzyme. Autophosphorylated. In terms of tissue distribution, roots and stems.

It carries out the reaction L-seryl-[protein] + ATP = O-phospho-L-seryl-[protein] + ADP + H(+). It catalyses the reaction L-threonyl-[protein] + ATP = O-phospho-L-threonyl-[protein] + ADP + H(+). With respect to regulation, activated by tyrosine and threonine phosphorylation. In terms of biological role, may play a role in the mitogenic induction of symbiotic root nodules on Alfalfa by Rhizobium signal molecules. The protein is Mitogen-activated protein kinase homolog MMK1 (MMK1) of Medicago sativa (Alfalfa).